The following is a 170-amino-acid chain: Peptide deformylase (170 aa).

Residues Cys91 and His133 each coordinate Fe cation. Residue Glu134 is part of the active site. His137 is a Fe cation binding site.

Belongs to the polypeptide deformylase family. Fe(2+) is required as a cofactor.

The catalysed reaction is N-terminal N-formyl-L-methionyl-[peptide] + H2O = N-terminal L-methionyl-[peptide] + formate. Functionally, removes the formyl group from the N-terminal Met of newly synthesized proteins. Requires at least a dipeptide for an efficient rate of reaction. N-terminal L-methionine is a prerequisite for activity but the enzyme has broad specificity at other positions. The protein is Peptide deformylase of Histophilus somni (strain 2336) (Haemophilus somnus).